A 246-amino-acid chain; its full sequence is 2-deoxyglucose-6-phosphate phosphatase 2 (246 aa).

Asp-83 (nucleophile) is an active-site residue. Asp-83 provides a ligand contact to Mg(2+). Substrate is bound by residues Asp-83, Glu-92, and 146–149 (DVKN). Asp-183 serves as a coordination point for Mg(2+).

The protein belongs to the HAD-like hydrolase superfamily. DOG/GPP family. The cofactor is Mg(2+).

The catalysed reaction is 2-deoxy-D-glucose 6-phosphate + H2O = 2-deoxy-D-glucose + phosphate. Phosphatase that is active on 2-deoxy-D-glucose 6-phosphate (2-DOG-6P), but not very active on fructose-1-P. The sequence is that of 2-deoxyglucose-6-phosphate phosphatase 2 from Saccharomyces cerevisiae (strain ATCC 204508 / S288c) (Baker's yeast).